Reading from the N-terminus, the 147-residue chain is Protein archease (147 aa).

Ca(2+) is bound by residues aspartate 17, aspartate 146, and isoleucine 147.

Belongs to the archease family.

Functionally, activates the tRNA-splicing ligase complex by facilitating the enzymatic turnover of catalytic subunit RtcB. Acts by promoting the guanylylation of RtcB, a key intermediate step in tRNA ligation. Can also alter the NTP specificity of RtcB such that ATP, dGTP or ITP is used efficiently. The polypeptide is Protein archease (Pyrobaculum neutrophilum (strain DSM 2338 / JCM 9278 / NBRC 100436 / V24Sta) (Thermoproteus neutrophilus)).